We begin with the raw amino-acid sequence, 248 residues long: PF03932 family protein CutC (248 aa).

It belongs to the CutC family.

It is found in the cytoplasm. The chain is PF03932 family protein CutC from Photorhabdus laumondii subsp. laumondii (strain DSM 15139 / CIP 105565 / TT01) (Photorhabdus luminescens subsp. laumondii).